The chain runs to 133 residues: Small ribosomal subunit protein uS8c (133 aa).

This sequence belongs to the universal ribosomal protein uS8 family. Part of the 30S ribosomal subunit.

Its subcellular location is the plastid. It localises to the chloroplast. One of the primary rRNA binding proteins, it binds directly to 16S rRNA central domain where it helps coordinate assembly of the platform of the 30S subunit. This Chlorokybus atmophyticus (Soil alga) protein is Small ribosomal subunit protein uS8c (rps8).